The sequence spans 440 residues: Xylose isomerase (440 aa).

Catalysis depends on residues histidine 100 and aspartate 103. 7 residues coordinate Mg(2+): glutamate 231, glutamate 267, histidine 270, aspartate 295, aspartate 306, aspartate 308, and aspartate 338.

The protein belongs to the xylose isomerase family. Homotetramer. Mg(2+) is required as a cofactor.

The protein localises to the cytoplasm. It catalyses the reaction alpha-D-xylose = alpha-D-xylulofuranose. This is Xylose isomerase from Burkholderia cenocepacia (strain HI2424).